Here is a 315-residue protein sequence, read N- to C-terminus: ADP/ATP translocase (315 aa).

The Mitochondrial intermembrane segment spans residues 1 to 13; sequence MSNKQETKILGMP. Solcar repeat units lie at residues 13–106 and 118–210; these read PPFV…FKAM and KWMA…IKPV. Residues 14–37 traverse the membrane as a helical segment; that stretch reads PFVVDFLMGGVSAAVSKTAAAPIE. Lys-30 provides a ligand contact to bongkrekate. Residues 38-80 are Mitochondrial matrix-facing; the sequence is RIKLLVQNQDEMIKAGRLDRRYNGIIDCFRRTTADEGLMALWR. Residues Ile-62 and 81 to 83 contribute to the a cardiolipin site; that span reads GNT. A helical membrane pass occupies residues 81 to 104; the sequence is GNTANVIRYFPTQALNFAFRDKFK. Arg-88 contacts ADP. Residues 88-89 and Asn-96 contribute to the bongkrekate site; that span reads RY. The Mitochondrial intermembrane portion of the chain corresponds to 105–115; the sequence is AMFGYKKDKDG. A helical membrane pass occupies residues 116–145; sequence YAKWMAGNLASGGAAGATSLLFVYSLDYAR. Residues 146-184 are Mitochondrial matrix-facing; the sequence is TRLANDAKSAKGGGARQFNGLIDVYRKTLASDGIAGLYR. Residues Leu-166 and 184–185 each bind a cardiolipin; that span reads RG. Residues 185-213 form a helical membrane-spanning segment; it reads GFGPSVAGIVVYRGLYFGMYDSIKPVVLV. A bongkrekate-binding site is contributed by 196–197; sequence YR. The Mitochondrial intermembrane segment spans residues 214–216; sequence GPL. The helical transmembrane segment at 217 to 242 threads the bilayer; that stretch reads ANNFLASFLLGWCVTTGAGIASYPLD. The Solcar repeat unit spans residues 218–304; the sequence is NNFLASFLLG…LSIYDQLQIL (87 aa). Residues 243–283 lie on the Mitochondrial matrix side of the membrane; that stretch reads TVRRRMMMTSGEAVKYKSSIDAFRQIIAKEGVKSLFKGAGA. Arg-245 lines the ADP pocket. Residues 245 to 250 carry the Nucleotide carrier signature motif motif; that stretch reads RRRMMM. Residues 260-261 and 280-282 contribute to the a cardiolipin site; these read SS and GAG. Residues 284–304 form a helical membrane-spanning segment; sequence NILRGVAGAGVLSIYDQLQIL. Over 305–315 the chain is Mitochondrial intermembrane; that stretch reads LFGKAFKGGSG.

This sequence belongs to the mitochondrial carrier (TC 2.A.29) family. Monomer.

It is found in the mitochondrion inner membrane. The catalysed reaction is ADP(in) + ATP(out) = ADP(out) + ATP(in). The matrix-open state (m-state) is inhibited by the membrane-permeable bongkrekic acid (BKA). The cytoplasmic-open state (c-state) is inhibited by the membrane-impermeable toxic inhibitor carboxyatractyloside (CATR). In terms of biological role, ADP:ATP antiporter that mediates import of ADP into the mitochondrial matrix for ATP synthesis, and export of ATP out to fuel the cell. Cycles between the cytoplasmic-open state (c-state) and the matrix-open state (m-state): operates by the alternating access mechanism with a single substrate-binding site intermittently exposed to either the cytosolic (c-state) or matrix (m-state) side of the inner mitochondrial membrane. This is ADP/ATP translocase from Thermothelomyces thermophilus (strain ATCC 42464 / BCRC 31852 / DSM 1799) (Sporotrichum thermophile).